A 650-amino-acid chain; its full sequence is DNA gyrase subunit B (650 aa).

Residues 400–414 (RRSQEARELTRRKSP) are compositionally biased toward basic and acidic residues. The interval 400 to 422 (RRSQEARELTRRKSPFDSGSLPG) is disordered. The region spanning 435–549 (SELYIVEGDS…QGNIYIAQPP (115 aa)) is the Toprim domain. The Mg(2+) site is built by Glu-441, Asp-514, and Asp-516.

It belongs to the type II topoisomerase GyrB family. In terms of assembly, heterotetramer, composed of two GyrA and two GyrB chains. In the heterotetramer, GyrA contains the active site tyrosine that forms a transient covalent intermediate with DNA, while GyrB binds cofactors and catalyzes ATP hydrolysis. Mg(2+) is required as a cofactor. Mn(2+) serves as cofactor. It depends on Ca(2+) as a cofactor.

It localises to the cytoplasm. The catalysed reaction is ATP-dependent breakage, passage and rejoining of double-stranded DNA.. Its function is as follows. A type II topoisomerase that negatively supercoils closed circular double-stranded (ds) DNA in an ATP-dependent manner to modulate DNA topology and maintain chromosomes in an underwound state. Negative supercoiling favors strand separation, and DNA replication, transcription, recombination and repair, all of which involve strand separation. Also able to catalyze the interconversion of other topological isomers of dsDNA rings, including catenanes and knotted rings. Type II topoisomerases break and join 2 DNA strands simultaneously in an ATP-dependent manner. The sequence is that of DNA gyrase subunit B from Mycoplasma pneumoniae (strain ATCC 29342 / M129 / Subtype 1) (Mycoplasmoides pneumoniae).